The primary structure comprises 198 residues: Suppressor of cytokine signaling 2 (198 aa).

The segment at 1 to 31 (MTLRCLEPSGNGADRTRSQWGTAGSPEDQSP) is disordered. The interval 1–75 (MTLRCLEPSG…PEGTFLIRDS (75 aa)) is interaction with AREL1. Phosphoserine is present on residues S30 and S52. The SH2 domain maps to 48-156 (WYWGSMTVNE…TVHLYLTKPL (109 aa)). One can recognise an SOCS box domain in the interval 151-197 (YLTKPLYTSAPTLQHFCRLSINKCTGTIRGLPLPTRLKDYLEEYKFQ). Residue K173 forms a Glycyl lysine isopeptide (Lys-Gly) (interchain with G-Cter in ubiquitin) linkage.

Substrate-recognition component of the ECS(SOCS2) complex, composed of SOCS2, CUL5, ELOB, ELOC and RNF7/RBX2. Interacts with IGF1R. Interacts with DCUN1D1. In terms of processing, ubiquitinated; mediated by AREL1 and leading to its subsequent proteasomal degradation. Ubiquitination is dependent on its phosphorylation at Ser-52, by PKC. Ubiquitination is stimulated by LPS. Phosphorylation at Ser-52 by PKC facilitates its ubiquitination and proteasomal degradation.

It is found in the cytoplasm. Its pathway is protein modification; protein ubiquitination. In terms of biological role, substrate-recognition component of a cullin-5-RING E3 ubiquitin-protein ligase complex (ECS complex, also named CRL5 complex), which mediates the ubiquitination and subsequent proteasomal degradation of target proteins, such as EPOR and GHR. Specifically recognizes and binds phosphorylated proteins via its SH2 domain, promoting their ubiquitination. The ECS(SOCS2) complex acts as a key regulator of growth hormone receptor (GHR) levels by mediating ubiquitination and degradation of GHR, following GHR phosphorylation by JAK2. The ECS(SOCS2) also catalyzes ubiquitination and degradation of JAK2-phosphorylated EPOR. This Rattus norvegicus (Rat) protein is Suppressor of cytokine signaling 2 (Socs2).